Consider the following 440-residue polypeptide: Transposon Ty1-MR1 Gag polyprotein (440 aa).

Polar residues-rich tracts occupy residues 1 to 31, 46 to 60, and 137 to 168; these read MESQ…TTQD, VSTQ…TPLS, and VGTH…TNQH. Disordered regions lie at residues 1–88, 137–174, and 350–424; these read MESQ…YPQQ, VGTH…PPPI, and QQES…TTEP. Positions 299-401 are RNA-binding; the sequence is NNGIPINNKV…NSQSRTARAH (103 aa). A compositionally biased stretch (basic and acidic residues) spans 363–372; that stretch reads SPSDEKKDSR. A compositionally biased stretch (polar residues) spans 373–411; that stretch reads TYTNTTKPKSITRNSQKPNNSQSRTARAHNVSTFNNSPG.

In terms of assembly, homotrimer.

It localises to the cytoplasm. In terms of biological role, capsid protein (CA) is the structural component of the virus-like particle (VLP), forming the shell that encapsulates the retrotransposons dimeric RNA genome. The particles are assembled from trimer-clustered units and there are holes in the capsid shells that allow for the diffusion of macromolecules. CA also has nucleocapsid-like chaperone activity, promoting primer tRNA(i)-Met annealing to the multipartite primer-binding site (PBS), dimerization of Ty1 RNA and initiation of reverse transcription. This Saccharomyces cerevisiae (strain ATCC 204508 / S288c) (Baker's yeast) protein is Transposon Ty1-MR1 Gag polyprotein (TY1A-MR1).